The sequence spans 337 residues: Putative olfactory receptor 1F12P (337 aa).

The Extracellular portion of the chain corresponds to 1–25 (MEGKNQTNISEFLLLGFSSWQQQQV). Residues Asn-5 and Asn-8 are each glycosylated (N-linked (GlcNAc...) asparagine). The chain crosses the membrane as a helical span at residues 26-49 (LLFALFLCLYLTGLFGNLLILLAI). Topologically, residues 50–57 (GSDHCLHT) are cytoplasmic. Residues 58 to 79 (PMYFFLANLSLVDLCLPSATVP) form a helical membrane-spanning segment. Topologically, residues 80–100 (KMLLNIQTQTQTISYPGCLAQ) are extracellular. Cys-97 and Cys-189 are oxidised to a cystine. Residues 101-120 (MYFCMMFANMDNFLLTVMAY) form a helical membrane-spanning segment. Residues 121-139 (DRYVAICHPLHYSTIMALR) are Cytoplasmic-facing. A helical membrane pass occupies residues 140–158 (LCASLVAAPWVIAILNPLL). Over 159–196 (HTLMMAHLHFCSDNVIHHFFCDINSLLPLSCSDTSLNQ) the chain is Extracellular. The chain crosses the membrane as a helical span at residues 197-219 (LSVLATVGLIFVVPSVCILVSYI). The Cytoplasmic portion of the chain corresponds to 220 to 236 (LIVSAVMKVPSAQGKLK). A helical membrane pass occupies residues 237-259 (AFSTCGSHLALVILFYGAITGVY). The Extracellular segment spans residues 260–272 (MSPLSNHSTEKDS). Asn-265 carries N-linked (GlcNAc...) asparagine glycosylation. A helical transmembrane segment spans residues 273-292 (AASVIFMVVAPVLNPFIYSL). Residues 293–337 (RNNELKGTLKKTLSRPGAVAHACNPSTLGGRGGWIMRSGDRDHPG) lie on the Cytoplasmic side of the membrane.

Belongs to the G-protein coupled receptor 1 family.

It is found in the cell membrane. Odorant receptor. In Homo sapiens (Human), this protein is Putative olfactory receptor 1F12P.